The chain runs to 213 residues: Probable nicotinate-nucleotide adenylyltransferase (213 aa).

It belongs to the NadD family.

It catalyses the reaction nicotinate beta-D-ribonucleotide + ATP + H(+) = deamido-NAD(+) + diphosphate. Its pathway is cofactor biosynthesis; NAD(+) biosynthesis; deamido-NAD(+) from nicotinate D-ribonucleotide: step 1/1. In terms of biological role, catalyzes the reversible adenylation of nicotinate mononucleotide (NaMN) to nicotinic acid adenine dinucleotide (NaAD). This Escherichia coli O17:K52:H18 (strain UMN026 / ExPEC) protein is Probable nicotinate-nucleotide adenylyltransferase.